A 173-amino-acid chain; its full sequence is MNAADISRAPPGYLEVAWIADTCKLLMGLGWTTNYAGMIYKSLKDRTYGMALMPLCCNFAWELTYAVIYPFGSRQDKFTHYFGLMLNCGVMYTAVKNAEREWTHAPLVRRNLPFIFIICIAAWTTAHLALALQIGPSHAQAFSAYGCQLLLSVGALCQLLSRGSSRGASYFLW.

4 helical membrane passes run 11 to 31, 51 to 71, 112 to 132, and 141 to 161; these read PGYLEVAWIADTCKLLMGLGW, ALMPLCCNFAWELTYAVIYPF, LPFIFIICIAAWTTAHLALAL, and AFSAYGCQLLLSVGALCQLLS.

The protein belongs to the paxB family.

It localises to the membrane. It participates in secondary metabolite biosynthesis; terpenoid biosynthesis. Terpene cyclase; part of the gene cluster that mediates the biosynthesis of the immunosuppressants subglutinols, meroterpenoids consisting of an alpha-pyrone (4-hydroxy-5,6-dimethyl-2-pyrone) moiety attached to a decalin core fused to a five-membered cyclic ether carrying a prenylside chain. The first step of the pathway is the synthesis of the alpha-pyrone moiety by the polyketide synthase subA via condensation of one acetyl-CoA starter unit with 3 malonyl-CoA units and 2 methylations. The alpha-pyrone is then combined with geranylgeranyl pyrophosphate (GGPP) formed by the GGPP synthase subD through the action of the prenyltransferase subC to yield a linear alpha-pyrone diterpenoid. Subsequent steps in the subglutinol biosynthetic pathway involve the decalin core formation, which is thought to be initiated by the epoxidation of the C10-C11 olefin by the FAD-dependent oxidoreductase subE. The following cyclization cascade would be catalyzed by the terpene cyclase subB. Lastly, the FAD-dependent dehydrogenase subF probably catalyzes the five-membered cyclic ether formation to complete the formation of subglutinol A. Subsequent redox reactions appear to give rise to subglutinol C and D, however, it remains unclear which enzymes are responsible for these transformations. SubD may have secondary function in the conversion of the identified subglutinols to subglutinol analog 45, which seems to be the major product of the cluster. In Metarhizium robertsii (strain ARSEF 23 / ATCC MYA-3075) (Metarhizium anisopliae (strain ARSEF 23)), this protein is Terpene cyclase subB.